The sequence spans 363 residues: Branched-chain-amino-acid aminotransferase 2 (363 aa).

N6-(pyridoxal phosphate)lysine is present on Lys197.

Belongs to the class-IV pyridoxal-phosphate-dependent aminotransferase family. It depends on pyridoxal 5'-phosphate as a cofactor.

It catalyses the reaction L-leucine + 2-oxoglutarate = 4-methyl-2-oxopentanoate + L-glutamate. The catalysed reaction is L-isoleucine + 2-oxoglutarate = (S)-3-methyl-2-oxopentanoate + L-glutamate. It carries out the reaction L-valine + 2-oxoglutarate = 3-methyl-2-oxobutanoate + L-glutamate. Its pathway is amino-acid biosynthesis; L-isoleucine biosynthesis; L-isoleucine from 2-oxobutanoate: step 4/4. The protein operates within amino-acid biosynthesis; L-leucine biosynthesis; L-leucine from 3-methyl-2-oxobutanoate: step 4/4. It functions in the pathway amino-acid biosynthesis; L-valine biosynthesis; L-valine from pyruvate: step 4/4. Inhibited by canaline. In terms of biological role, transaminates branched-chain amino acids and ketoglutarate. This Bacillus subtilis (strain 168) protein is Branched-chain-amino-acid aminotransferase 2 (ilvK).